Reading from the N-terminus, the 330-residue chain is Peroxisomal membrane protein PEX13 (330 aa).

Pro residues predominate over residues 1–14 (MSAPPTNQPPPLPP). The segment at 1–20 (MSAPPTNQPPPLPPRSFDNQ) is disordered. The helical transmembrane segment at 193–213 (ASVNWPAALFWVVAIGGPWLI) threads the bilayer. One can recognise an SH3 domain in the interval 235 to 300 (APHYTAQALF…PINYVRIVGK (66 aa)).

This sequence belongs to the peroxin-13 family. As to quaternary structure, interacts with PEX14/prx-14; forming the PEX13-PEX14 docking complex.

It is found in the peroxisome membrane. In terms of biological role, component of the PEX13-PEX14 docking complex, a translocon channel that specifically mediates the import of peroxisomal cargo proteins bound to PEX5/prx-5 receptor. The PEX13-PEX14 docking complex forms a large import pore which can be opened to a diameter of about 9 nm. Mechanistically, PEX5/prx-5 receptor along with cargo proteins associates with the PEX14/prx-14 subunit of the PEX13-PEX14 docking complex in the cytosol, leading to the insertion of the receptor into the organelle membrane with the concomitant translocation of the cargo into the peroxisome matrix. The sequence is that of Peroxisomal membrane protein PEX13 (prx-13) from Caenorhabditis elegans.